A 386-amino-acid polypeptide reads, in one-letter code: S-adenosylmethionine synthase (386 aa).

His-16 contacts ATP. Asp-18 serves as a coordination point for Mg(2+). Residue Glu-44 coordinates K(+). Residues Glu-57 and Gln-100 each coordinate L-methionine. The flexible loop stretch occupies residues 100–110 (QSPDINQGVDQ). Residues 164-166 (DGK), 230-231 (RF), Asp-239, 245-246 (RK), Ala-262, and Lys-266 each bind ATP. Asp-239 contacts L-methionine. Position 270 (Lys-270) interacts with L-methionine.

It belongs to the AdoMet synthase family. In terms of assembly, homotetramer; dimer of dimers. The cofactor is Mg(2+). K(+) is required as a cofactor.

Its subcellular location is the cytoplasm. The catalysed reaction is L-methionine + ATP + H2O = S-adenosyl-L-methionine + phosphate + diphosphate. The protein operates within amino-acid biosynthesis; S-adenosyl-L-methionine biosynthesis; S-adenosyl-L-methionine from L-methionine: step 1/1. In terms of biological role, catalyzes the formation of S-adenosylmethionine (AdoMet) from methionine and ATP. The overall synthetic reaction is composed of two sequential steps, AdoMet formation and the subsequent tripolyphosphate hydrolysis which occurs prior to release of AdoMet from the enzyme. In Nitratiruptor sp. (strain SB155-2), this protein is S-adenosylmethionine synthase.